Consider the following 217-residue polypeptide: MKFFVDTAEIDAIAELNDLGMVDGVTTNPSLIKKSGRDIIEVTREICAMVDGPVSAEVTATDAETMIAEGRKLVEIAGNIAVKVPLTWDGLKACKVLSDDGHMVNVTLCFSANQALLAAKAGATFISPFIGRLDDINLDGMELIEDIRTIYDNYGFETQILAASIRSVNHILDSARIGADVITAPPAVIKAMVNHPLTDKGLDAFLADIKAADIKIL.

Catalysis depends on Lys-83, which acts as the Schiff-base intermediate with substrate.

The protein belongs to the transaldolase family. Type 3B subfamily.

Its subcellular location is the cytoplasm. It catalyses the reaction D-sedoheptulose 7-phosphate + D-glyceraldehyde 3-phosphate = D-erythrose 4-phosphate + beta-D-fructose 6-phosphate. It participates in carbohydrate degradation; pentose phosphate pathway; D-glyceraldehyde 3-phosphate and beta-D-fructose 6-phosphate from D-ribose 5-phosphate and D-xylulose 5-phosphate (non-oxidative stage): step 2/3. In terms of biological role, transaldolase is important for the balance of metabolites in the pentose-phosphate pathway. This Ruegeria pomeroyi (strain ATCC 700808 / DSM 15171 / DSS-3) (Silicibacter pomeroyi) protein is Probable transaldolase.